Here is a 97-residue protein sequence, read N- to C-terminus: Large ribosomal subunit protein uL23 (97 aa).

Belongs to the universal ribosomal protein uL23 family. As to quaternary structure, part of the 50S ribosomal subunit. Contacts protein L29, and trigger factor when it is bound to the ribosome.

In terms of biological role, one of the early assembly proteins it binds 23S rRNA. One of the proteins that surrounds the polypeptide exit tunnel on the outside of the ribosome. Forms the main docking site for trigger factor binding to the ribosome. This is Large ribosomal subunit protein uL23 from Lactiplantibacillus plantarum (strain ATCC BAA-793 / NCIMB 8826 / WCFS1) (Lactobacillus plantarum).